Reading from the N-terminus, the 345-residue chain is Erythronate-4-phosphate dehydrogenase (345 aa).

Ser45 contacts substrate. Residues Asp146 and Thr174 each contribute to the NAD(+) site. Arg207 is an active-site residue. NAD(+) is bound at residue Asp227. The active site involves Glu232. The active-site Proton donor is His249. Gly252 contacts NAD(+).

The protein belongs to the D-isomer specific 2-hydroxyacid dehydrogenase family. PdxB subfamily. In terms of assembly, homodimer.

The protein resides in the cytoplasm. It catalyses the reaction 4-phospho-D-erythronate + NAD(+) = (R)-3-hydroxy-2-oxo-4-phosphooxybutanoate + NADH + H(+). It functions in the pathway cofactor biosynthesis; pyridoxine 5'-phosphate biosynthesis; pyridoxine 5'-phosphate from D-erythrose 4-phosphate: step 2/5. Its function is as follows. Catalyzes the oxidation of erythronate-4-phosphate to 3-hydroxy-2-oxo-4-phosphonooxybutanoate. The chain is Erythronate-4-phosphate dehydrogenase from Ruthia magnifica subsp. Calyptogena magnifica.